The following is a 262-amino-acid chain: Probable ketoamine kinase TTHA1179 (262 aa).

79-81 is a binding site for ATP; that stretch reads AYL. Asp172 serves as the catalytic Proton acceptor.

The protein belongs to the fructosamine kinase family.

The catalysed reaction is N(6)-(D-ribulosyl)-L-lysine + ATP = N(6)-(3-O-phospho-D-ribulosyl)-L-lysine + ADP + H(+). It catalyses the reaction N(6)-(D-erythrulosyl)-L-lysine + ATP = N(6)-(3-O-phospho-D-erythrulosyl)-L-lysine + ADP + H(+). It carries out the reaction N(6)-D-ribulosyl-L-lysyl-[protein] + ATP = N(6)-(3-O-phospho-D-ribulosyl)-L-lysyl-[protein] + ADP + H(+). The enzyme catalyses N(6)-(D-erythrulosyl)-L-lysyl-[protein] + ATP = N(6)-(3-O-phospho-D-erythrulosyl)-L-lysyl-[protein] + ADP + H(+). In terms of biological role, ketoamine kinase that phosphorylates ketoamines, such as erythruloselysine and ribuloselysine, on the third carbon of the sugar moiety to generate ketoamine 3-phosphate. Has higher activity on free lysine (erythruloselysine and ribuloselysine), than on ribuloselysine and erythruloselysine residues on glycated proteins. This Thermus thermophilus (strain ATCC 27634 / DSM 579 / HB8) protein is Probable ketoamine kinase TTHA1179.